Consider the following 235-residue polypeptide: Probable transcriptional regulatory protein MPN_478 (235 aa).

It belongs to the TACO1 family.

Its subcellular location is the cytoplasm. The protein is Probable transcriptional regulatory protein MPN_478 of Mycoplasma pneumoniae (strain ATCC 29342 / M129 / Subtype 1) (Mycoplasmoides pneumoniae).